Reading from the N-terminus, the 544-residue chain is Membrane protein insertase YidC (544 aa).

The chain crosses the membrane as a helical span at residues 6–26 (NLLLIALLFVTFMLWQAWETD). Residues 112–132 (SGLTGKNGPDNPANGPRPLFT) are disordered. Helical transmembrane passes span 343-363 (KFLHGFIGNWGFSIIAITFIV), 418-438 (LGGCFPLLIQMPIFLALYYML), 456-476 (LSAQDPYYILPILMGVTMFFI), and 497-517 (PVIFTVFFLWFPSGLVMYYIV).

Belongs to the OXA1/ALB3/YidC family. Type 1 subfamily. Interacts with the Sec translocase complex via SecD. Specifically interacts with transmembrane segments of nascent integral membrane proteins during membrane integration.

The protein resides in the cell inner membrane. Required for the insertion and/or proper folding and/or complex formation of integral membrane proteins into the membrane. Involved in integration of membrane proteins that insert both dependently and independently of the Sec translocase complex, as well as at least some lipoproteins. Aids folding of multispanning membrane proteins. This is Membrane protein insertase YidC from Pectobacterium carotovorum subsp. carotovorum (strain PC1).